The sequence spans 368 residues: H-2 class I histocompatibility antigen, K-W28 alpha chain (368 aa).

Positions 1–21 (MAPCMLLLLLAAALAPTQTRA) are cleaved as a signal peptide. The interval 22–111 (GPHSLRYFHT…LLRYYNQSAG (90 aa)) is alpha-1. At 22-305 (GPHSLRYFHT…EPPPSAVSNT (284 aa)) the chain is on the extracellular side. N-linked (GlcNAc...) asparagine glycosylation occurs at N107. Residues 112 to 203 (GSHTIQRMYG…KNGNATLLRT (92 aa)) are alpha-2. Cysteines 122 and 185 form a disulfide. Residue N197 is glycosylated (N-linked (GlcNAc...) asparagine). The tract at residues 204–295 (DSPKAHVTHH…GLPKPLTLRW (92 aa)) is alpha-3. An Ig-like C1-type domain is found at 206–292 (PKAHVTHHSR…YHQGLPKPLT (87 aa)). A disulfide bridge connects residues C224 and C280. A connecting peptide region spans residues 296–305 (EPPPSAVSNT). A helical membrane pass occupies residues 306 to 329 (VIIAVLVVLGAAIVTGAVVAFVMM). Residues 330–368 (RRRNTGGKGGDYALAPGSQTSDLSLPDCKVMVHDPHSLA) lie on the Cytoplasmic side of the membrane. A phosphoserine mark is found at S350 and S353.

This sequence belongs to the MHC class I family. As to quaternary structure, heterodimer of an alpha chain and a beta chain (beta-2-microglobulin).

It is found in the membrane. Its function is as follows. Involved in the presentation of foreign antigens to the immune system. The sequence is that of H-2 class I histocompatibility antigen, K-W28 alpha chain (H2-K1) from Mus musculus (Mouse).